A 76-amino-acid polypeptide reads, in one-letter code: MRTFAFLTAMLLLVALHAQAEARQARADEAAIQEQPGADDQGMAHSFTRNESAVLPLSESERGLRCICLLGICRLL.

The signal sequence occupies residues methionine 1–alanine 22. Positions arginine 23–leucine 64 are excised as a propeptide. A Cyclopeptide (Arg-Cys) (interchain with C-73 in subunit A); in form BTD-4 cross-link involves residue arginine 65. A disulfide bridge links cysteine 68 with cysteine 73. Residue cysteine 73 forms a Cyclopeptide (Cys-Arg) (interchain with R-65 in subunit A); in form BTD-4 linkage. Residues arginine 74–leucine 76 constitute a propeptide that is removed on maturation.

The protein belongs to the alpha-defensin family. Theta subfamily. BTD-4 is a cyclic heterodimer composed of subunits A and C; disulfide-linked. Forms a cyclic peptide with subunit A (BTD-4). An additional intersubunit disulfide bond is formed.

In terms of biological role, BTD-4 has antimicrobial activity against the Gram-negative bacterium E.coli ML35, the Gram-positive bacterium S.aureus 502a, and the fungus C.albicans 16820. The sequence is that of Theta defensin subunit C (BTDC) from Papio anubis (Olive baboon).